Here is a 174-residue protein sequence, read N- to C-terminus: SILNLCIISVDRYWAISRPFCYERKMTQRVALVMVGLAWTLSILISFIPVQLHWHRDKVGSRDGLDPPSNLANGTPWEEAGESDRSAENCDSSLNRTYAISSSLISFYIPVAIMIVTYTRIYRIAQVQIRRISSLERAAEHAQSCRSREACAPDSGLRASIKKETKVLKTLSVI.

A helical transmembrane segment spans residues 1-10 (SILNLCIISV). Residues 11–32 (DRYWAISRPFCYERKMTQRVAL) are Cytoplasmic-facing. A helical transmembrane segment spans residues 33 to 54 (VMVGLAWTLSILISFIPVQLHW). Over 55-96 (HRDKVGSRDGLDPPSNLANGTPWEEAGESDRSAENCDSSLNR) the chain is Extracellular. Residues 64–88 (GLDPPSNLANGTPWEEAGESDRSAE) form a disordered region. N-linked (GlcNAc...) asparagine glycosylation occurs at asparagine 95. A helical membrane pass occupies residues 97-119 (TYAISSSLISFYIPVAIMIVTYT). Residues 120–169 (RIYRIAQVQIRRISSLERAAEHAQSCRSREACAPDSGLRASIKKETKVLK) lie on the Cytoplasmic side of the membrane. Residues 170–174 (TLSVI) form a helical membrane-spanning segment.

This sequence belongs to the G-protein coupled receptor 1 family.

It localises to the cell membrane. In terms of biological role, dopamine receptor whose activity is mediated by G proteins which activate adenylyl cyclase. The sequence is that of D(1B) dopamine receptor (DRD5) from Bos taurus (Bovine).